A 128-amino-acid polypeptide reads, in one-letter code: S-protein homolog 5 (128 aa).

A signal peptide spans M1–G20.

This sequence belongs to the plant self-incompatibility (S1) protein family.

The protein localises to the secreted. In Arabidopsis thaliana (Mouse-ear cress), this protein is S-protein homolog 5.